The primary structure comprises 471 residues: Desmin (471 aa).

A head region spans residues 2–109; sequence SQAYSSSQRV…QEFLTTRTNE (108 aa). Ser-7 is subject to Phosphoserine; by CDK1. Position 12 is a phosphoserine; by AURKB (Ser-12). Arg-16 carries the omega-N-methylarginine modification. Thr-17 carries the post-translational modification Phosphothreonine; by AURKB and ROCK1. Phosphoserine; by CDK1 is present on Ser-28. Residue Ser-31 is modified to Phosphoserine. Ser-32 is subject to Phosphoserine; by CDK1. Position 37 is an asymmetric dimethylarginine; alternate (Arg-37). Position 37 is an omega-N-methylarginine; alternate (Arg-37). Position 45 is a phosphoserine (Ser-45). Arg-58 carries the post-translational modification ADP-ribosylarginine. At Ser-60 the chain carries Phosphoserine; by AURKB. Position 70 is an omega-N-methylarginine (Arg-70). A Phosphothreonine; by ROCK1 modification is found at Thr-77. Ser-81 bears the Phosphoserine mark. The region spanning 109–417 is the IF rod domain; that stretch reads EKVELQELND…KLLEGEESRI (309 aa). Residues 110 to 142 are coil 1A; it reads KVELQELNDRFANYIEKVRFLEQQNAALAAEVN. The segment at 143 to 152 is linker 1; that stretch reads RLKGREPTRV. A coil 1B region spans residues 153–253; that stretch reads AEIYEEELRE…HEEEIRELQA (101 aa). The segment at 254–269 is linker 12; sequence QLQEQQVQVEMDMSKP. Positions 269–416 are interaction with NEB; it reads PDLTAALRDI…RKLLEGEESR (148 aa). The interval 270–288 is coil 2A; that stretch reads DLTAALRDIRAQYETIAAK. A linker 2 region spans residues 289 to 296; it reads NISEAEEW. 4 positions are modified to phosphoserine: Ser-291, Ser-359, Ser-362, and Ser-425. Residues 297–413 form a coil 2B region; it reads YKSKVSDLTQ…ATYRKLLEGE (117 aa). The interval 414–471 is tail; the sequence is ESRINLPIQTFSALNFRETSPEQRGSEVHTKKTVMIKTIETRDGEVVSEATQQQHEVL. The interaction with CRYAB stretch occupies residues 439 to 454; sequence SEVHTKKTVMIKTIET.

The protein belongs to the intermediate filament family. As to quaternary structure, homomer. Interacts with DST. Interacts with MTM1. Interacts with EPPK1; interaction is dependent of higher-order structure of intermediate filament. Interacts with CRYAB. Interacts with NEB (via nebulin repeats 160-164). Interacts (via rod region) with NEBL (via nebulin repeats 1-5). Interacts with ASB2; the interaction targets DES for proteasomal degradation. Interacts with PKP1. Interacts with FLII. ADP-ribosylation prevents ability to form intermediate filaments. Post-translationally, phosphorylation at Ser-7, Ser-28 and Ser-32 by CDK1 and phosphorylation at Ser-60 by AURKB contribute to efficient separation of desmin intermediate filaments during mitosis. In terms of processing, ubiquitination by a SCF-like complex containing ASB2 leads to proteasomal degradation.

The protein localises to the cytoplasm. Its subcellular location is the myofibril. The protein resides in the sarcomere. It localises to the z line. It is found in the cell membrane. The protein localises to the sarcolemma. Its subcellular location is the nucleus. The protein resides in the cell tip. It localises to the nucleus envelope. In terms of biological role, muscle-specific type III intermediate filament essential for proper muscular structure and function. Plays a crucial role in maintaining the structure of sarcomeres, inter-connecting the Z-disks and forming the myofibrils, linking them not only to the sarcolemmal cytoskeleton, but also to the nucleus and mitochondria, thus providing strength for the muscle fiber during activity. In adult striated muscle they form a fibrous network connecting myofibrils to each other and to the plasma membrane from the periphery of the Z-line structures. May act as a sarcomeric microtubule-anchoring protein: specifically associates with detyrosinated tubulin-alpha chains, leading to buckled microtubules and mechanical resistance to contraction. Required for nuclear membrane integrity, via anchoring at the cell tip and nuclear envelope, resulting in maintenance of microtubule-derived intracellular mechanical forces. Contributes to the transcriptional regulation of the NKX2-5 gene in cardiac progenitor cells during a short period of cardiomyogenesis and in cardiac side population stem cells in the adult. Plays a role in maintaining an optimal conformation of nebulette (NEB) on heart muscle sarcomeres to bind and recruit cardiac alpha-actin. This chain is Desmin (DES), found in Sus scrofa (Pig).